Reading from the N-terminus, the 376-residue chain is Lipid-A-disaccharide synthase (376 aa).

It belongs to the LpxB family.

The catalysed reaction is a lipid X + a UDP-2-N,3-O-bis[(3R)-3-hydroxyacyl]-alpha-D-glucosamine = a lipid A disaccharide + UDP + H(+). Its pathway is bacterial outer membrane biogenesis; LPS lipid A biosynthesis. Functionally, condensation of UDP-2,3-diacylglucosamine and 2,3-diacylglucosamine-1-phosphate to form lipid A disaccharide, a precursor of lipid A, a phosphorylated glycolipid that anchors the lipopolysaccharide to the outer membrane of the cell. In Coxiella burnetii (strain Dugway 5J108-111), this protein is Lipid-A-disaccharide synthase.